The following is a 352-amino-acid chain: Histidine biosynthesis bifunctional protein HisB (352 aa).

The tract at residues M1–F164 is histidinol-phosphatase. D9 serves as the catalytic Nucleophile. The Mg(2+) site is built by D9 and D11. Catalysis depends on D11, which acts as the Proton donor. 4 residues coordinate Zn(2+): C93, H95, C101, and C103. D130 contacts Mg(2+). Residues R165 to I352 are imidazoleglycerol-phosphate dehydratase.

It in the N-terminal section; belongs to the histidinol-phosphatase family. The protein in the C-terminal section; belongs to the imidazoleglycerol-phosphate dehydratase family. It depends on Mg(2+) as a cofactor. Zn(2+) serves as cofactor.

The protein localises to the cytoplasm. It carries out the reaction D-erythro-1-(imidazol-4-yl)glycerol 3-phosphate = 3-(imidazol-4-yl)-2-oxopropyl phosphate + H2O. The catalysed reaction is L-histidinol phosphate + H2O = L-histidinol + phosphate. It participates in amino-acid biosynthesis; L-histidine biosynthesis; L-histidine from 5-phospho-alpha-D-ribose 1-diphosphate: step 6/9. The protein operates within amino-acid biosynthesis; L-histidine biosynthesis; L-histidine from 5-phospho-alpha-D-ribose 1-diphosphate: step 8/9. This Campylobacter jejuni subsp. jejuni serotype O:23/36 (strain 81-176) protein is Histidine biosynthesis bifunctional protein HisB.